Consider the following 154-residue polypeptide: 6,7-dimethyl-8-ribityllumazine synthase (154 aa).

Residues Phe-22, 57 to 59, and 81 to 83 contribute to the 5-amino-6-(D-ribitylamino)uracil site; these read VCE and TVI. Residue 86–87 coordinates (2S)-2-hydroxy-3-oxobutyl phosphate; sequence KT. The Proton donor role is filled by His-89. Val-114 provides a ligand contact to 5-amino-6-(D-ribitylamino)uracil. Arg-128 provides a ligand contact to (2S)-2-hydroxy-3-oxobutyl phosphate.

This sequence belongs to the DMRL synthase family. Forms an icosahedral capsid composed of 60 subunits, arranged as a dodecamer of pentamers.

The enzyme catalyses (2S)-2-hydroxy-3-oxobutyl phosphate + 5-amino-6-(D-ribitylamino)uracil = 6,7-dimethyl-8-(1-D-ribityl)lumazine + phosphate + 2 H2O + H(+). Its pathway is cofactor biosynthesis; riboflavin biosynthesis; riboflavin from 2-hydroxy-3-oxobutyl phosphate and 5-amino-6-(D-ribitylamino)uracil: step 1/2. In terms of biological role, catalyzes the formation of 6,7-dimethyl-8-ribityllumazine by condensation of 5-amino-6-(D-ribitylamino)uracil with 3,4-dihydroxy-2-butanone 4-phosphate. This is the penultimate step in the biosynthesis of riboflavin. The protein is 6,7-dimethyl-8-ribityllumazine synthase of Wigglesworthia glossinidia brevipalpis.